Here is a 466-residue protein sequence, read N- to C-terminus: Gamma-glutamylpolyamine synthetase GlnA3 (466 aa).

The region spanning 127–466 (GRTVLRRIVA…GVAAAYRWKY (340 aa)) is the GS catalytic domain. Residues Glu151 and Glu153 each coordinate Mg(2+). Glu202 serves as a coordination point for ATP. Mg(2+) is bound by residues Glu207 and Glu214. Gly259 is an L-glutamate binding site. His263 lines the Mg(2+) pocket. Ser267 serves as a coordination point for ATP. Arg316 and Arg334 together coordinate L-glutamate. 2 residues coordinate ATP: Arg334 and Arg339. Glu355 is a binding site for Mg(2+).

Belongs to the glutamine synthetase family. It depends on Mg(2+) as a cofactor. In terms of tissue distribution, expressed in mycelium.

The enzyme catalyses spermine + L-glutamate + ATP = gamma-L-glutamylspermine + ADP + phosphate + H(+). It catalyses the reaction spermidine + L-glutamate + ATP = gamma-L-glutamylspermidine + ADP + phosphate + H(+). The catalysed reaction is putrescine + L-glutamate + ATP = gamma-L-glutamylputrescine + ADP + phosphate + H(+). It carries out the reaction cadaverine + L-glutamate + ATP = gamma-L-glutamylcadaverine + ADP + phosphate + H(+). The protein operates within amine and polyamine degradation; putrescine degradation. It functions in the pathway amine and polyamine degradation; spermidine degradation. It participates in amine and polyamine degradation; spermine degradation. Involved in the catabolism of polyamines. Catalyzes the ATP-dependent gamma-glutamylation of polyamines. Substrates include putrescine, cadaverine, spermidine and spermine, with a preference for long-chain polyamines spermidine and spermine. Is not able to compensate for the loss of glutamine synthetases (GSs). No complementation of the L-glutamine auxotrophy of an E.coli glnA mutant. Involved in morphological differentiation and in the production of secondary metabolites. Together with GlnA2, enables survival of S.coelicolor under exposure to high local environmental polyamine concentrations, which is toxic to the cells. This is Gamma-glutamylpolyamine synthetase GlnA3 from Streptomyces coelicolor (strain ATCC BAA-471 / A3(2) / M145).